The sequence spans 325 residues: DNA-directed RNA polymerase subunit alpha (325 aa).

The tract at residues 1–231 (MQTSLLKPKI…DQLSVFAALE (231 aa)) is alpha N-terminal domain (alpha-NTD). Residues 246–325 (IDPILLRPVD…ENWPPAGLDK (80 aa)) form an alpha C-terminal domain (alpha-CTD) region.

It belongs to the RNA polymerase alpha chain family. In terms of assembly, homodimer. The RNAP catalytic core consists of 2 alpha, 1 beta, 1 beta' and 1 omega subunit. When a sigma factor is associated with the core the holoenzyme is formed, which can initiate transcription.

It catalyses the reaction RNA(n) + a ribonucleoside 5'-triphosphate = RNA(n+1) + diphosphate. In terms of biological role, DNA-dependent RNA polymerase catalyzes the transcription of DNA into RNA using the four ribonucleoside triphosphates as substrates. The chain is DNA-directed RNA polymerase subunit alpha from Burkholderia orbicola (strain MC0-3).